Consider the following 313-residue polypeptide: Ornithine carbamoyltransferase (313 aa).

Carbamoyl phosphate-binding positions include Ser57–Thr60, Gln84, Arg108, and His135–Gln138. L-ornithine is bound by residues Asn167, Asp231, and Ser235–Met236. Residues Cys272 to Leu273 and Arg300 contribute to the carbamoyl phosphate site.

The protein belongs to the aspartate/ornithine carbamoyltransferase superfamily. OTCase family.

The protein localises to the cytoplasm. The catalysed reaction is carbamoyl phosphate + L-ornithine = L-citrulline + phosphate + H(+). The protein operates within amino-acid biosynthesis; L-arginine biosynthesis; L-arginine from L-ornithine and carbamoyl phosphate: step 1/3. Its function is as follows. Reversibly catalyzes the transfer of the carbamoyl group from carbamoyl phosphate (CP) to the N(epsilon) atom of ornithine (ORN) to produce L-citrulline. The sequence is that of Ornithine carbamoyltransferase from Pseudothermotoga lettingae (strain ATCC BAA-301 / DSM 14385 / NBRC 107922 / TMO) (Thermotoga lettingae).